We begin with the raw amino-acid sequence, 427 residues long: 3-phosphoshikimate 1-carboxyvinyltransferase (427 aa).

Positions 22, 23, and 27 each coordinate 3-phosphoshikimate. Phosphoenolpyruvate is bound at residue lysine 22. Residues glycine 96 and arginine 124 each coordinate phosphoenolpyruvate. Residues serine 169, serine 170, glutamine 171, serine 197, aspartate 313, asparagine 336, and lysine 340 each contribute to the 3-phosphoshikimate site. Phosphoenolpyruvate is bound at residue glutamine 171. Residue aspartate 313 is the Proton acceptor of the active site. The phosphoenolpyruvate site is built by arginine 344, arginine 386, and lysine 411.

The protein belongs to the EPSP synthase family. Monomer.

It is found in the cytoplasm. It catalyses the reaction 3-phosphoshikimate + phosphoenolpyruvate = 5-O-(1-carboxyvinyl)-3-phosphoshikimate + phosphate. Its pathway is metabolic intermediate biosynthesis; chorismate biosynthesis; chorismate from D-erythrose 4-phosphate and phosphoenolpyruvate: step 6/7. Catalyzes the transfer of the enolpyruvyl moiety of phosphoenolpyruvate (PEP) to the 5-hydroxyl of shikimate-3-phosphate (S3P) to produce enolpyruvyl shikimate-3-phosphate and inorganic phosphate. The chain is 3-phosphoshikimate 1-carboxyvinyltransferase from Citrobacter koseri (strain ATCC BAA-895 / CDC 4225-83 / SGSC4696).